A 374-amino-acid polypeptide reads, in one-letter code: 8-amino-7-oxononanoate synthase (374 aa).

Residues arginine 22 and arginine 29 each coordinate substrate. A pyridoxal 5'-phosphate-binding site is contributed by 109–110 (GY). Position 134 (histidine 134) interacts with substrate. Residues serine 182, 207 to 210 (DDAH), and 227 to 230 (TLSK) contribute to the pyridoxal 5'-phosphate site. Lysine 230 carries the post-translational modification N6-(pyridoxal phosphate)lysine. Threonine 339 is a substrate binding site.

It belongs to the class-II pyridoxal-phosphate-dependent aminotransferase family. BioF subfamily. In terms of assembly, homodimer. Requires pyridoxal 5'-phosphate as cofactor.

It catalyses the reaction 6-carboxyhexanoyl-[ACP] + L-alanine + H(+) = (8S)-8-amino-7-oxononanoate + holo-[ACP] + CO2. Its pathway is cofactor biosynthesis; biotin biosynthesis. Functionally, catalyzes the decarboxylative condensation of pimeloyl-[acyl-carrier protein] and L-alanine to produce 8-amino-7-oxononanoate (AON), [acyl-carrier protein], and carbon dioxide. The sequence is that of 8-amino-7-oxononanoate synthase from Methylobacterium radiotolerans (strain ATCC 27329 / DSM 1819 / JCM 2831 / NBRC 15690 / NCIMB 10815 / 0-1).